The sequence spans 342 residues: P2Y purinoceptor 12 (342 aa).

Over 1–27 the chain is Extracellular; the sequence is MQAVDNLTSAPGNTSLCTRDYKITQVL. Residues Asn-6 and Asn-13 are each glycosylated (N-linked (GlcNAc...) asparagine). 2 cysteine pairs are disulfide-bonded: Cys-17/Cys-270 and Cys-97/Cys-175. Residues 28 to 50 form a helical membrane-spanning segment; that stretch reads FPLLYTVLFFVGLITNGLAMRIF. At 51-61 the chain is on the cytoplasmic side; sequence FQIRSKSNFII. Residues Ser-55 and Ser-57 each carry the phosphoserine modification. A helical membrane pass occupies residues 62–82; that stretch reads FLKNTVISDLLMILTFPFKIL. Over 83 to 97 the chain is Extracellular; the sequence is SDAKLGTGPLRTFVC. ADP contacts are provided by Arg-93, Cys-97, and Tyr-105. A helical transmembrane segment spans residues 98–118; sequence QVTSVIFYFTMYISISFLGLI. Residues 119-142 are Cytoplasmic-facing; it reads TIDRYQKTTRPFKTSNPKNLLGAK. A helical transmembrane segment spans residues 143 to 162; that stretch reads ILSVVIWAFMFLLSLPNMIL. ADP-binding positions include 156-159, 175-179, His-187, and Asn-191; these read SLPN and CSFLK. The Extracellular portion of the chain corresponds to 163 to 185; the sequence is TNRQPRDKNVKKCSFLKSEFGLV. A helical transmembrane segment spans residues 186–207; the sequence is WHEIVNYICQVIFWINFLIVIV. At 208–233 the chain is on the cytoplasmic side; that stretch reads CYTLITKELYRSYVRTRGVGKVPRKK. A helical membrane pass occupies residues 234–259; the sequence is VNVKVFIIIAVFFICFVPFHFARIPY. Residues 256–259, Gln-263, and Lys-280 each bind ADP; that span reads RIPY. Residues 260–278 lie on the Extracellular side of the membrane; it reads TLSQTRDVFDCTAENTLFY. The helical transmembrane segment at 279 to 298 threads the bilayer; that stretch reads VKESTLWLTSLNACLDPFIY. Over 299 to 342 the chain is Cytoplasmic; it reads FFLCKSFRNSLISMLKCPNSATSLSQDNRKKEQDGGDPNEETPM. The disordered stretch occupies residues 319–342; that stretch reads ATSLSQDNRKKEQDGGDPNEETPM. A compositionally biased stretch (acidic residues) spans 333–342; it reads GGDPNEETPM.

The protein belongs to the G-protein coupled receptor 1 family. Highly expressed in the platelets, lower levels in the brain. Lowest levels in the lung, appendix, pituitary and adrenal gland. Expressed in the spinal cord and in the fetal brain.

It localises to the cell membrane. Its function is as follows. Receptor for ADP and ATP coupled to G-proteins that inhibit the adenylyl cyclase second messenger system. Not activated by UDP and UTP. Required for normal platelet aggregation and blood coagulation. The polypeptide is P2Y purinoceptor 12 (P2RY12) (Homo sapiens (Human)).